The sequence spans 339 residues: Glycerol-3-phosphate dehydrogenase [NAD(P)+] (339 aa).

Positions 15, 16, 36, and 110 each coordinate NADPH. Sn-glycerol 3-phosphate contacts are provided by Lys110, Gly139, and Thr141. Ala143 is a binding site for NADPH. Sn-glycerol 3-phosphate-binding residues include Lys195, Asp248, Ser258, Arg259, and Asn260. The active-site Proton acceptor is the Lys195. Residue Arg259 participates in NADPH binding. Val283 and Glu285 together coordinate NADPH.

It belongs to the NAD-dependent glycerol-3-phosphate dehydrogenase family.

The protein localises to the cytoplasm. The catalysed reaction is sn-glycerol 3-phosphate + NAD(+) = dihydroxyacetone phosphate + NADH + H(+). The enzyme catalyses sn-glycerol 3-phosphate + NADP(+) = dihydroxyacetone phosphate + NADPH + H(+). Its pathway is membrane lipid metabolism; glycerophospholipid metabolism. Its function is as follows. Catalyzes the reduction of the glycolytic intermediate dihydroxyacetone phosphate (DHAP) to sn-glycerol 3-phosphate (G3P), the key precursor for phospholipid synthesis. This Klebsiella pneumoniae subsp. pneumoniae (strain ATCC 700721 / MGH 78578) protein is Glycerol-3-phosphate dehydrogenase [NAD(P)+].